A 264-amino-acid polypeptide reads, in one-letter code: uncharacterized protein (264 aa).

Composition is skewed to polar residues over residues 1–18 (MFENLNTALTPKLQSSRS), 73–83 (SLGSVGTTEVN), and 126–139 (KTTQDMLISSQPVL). 2 disordered regions span residues 1 to 47 (MFEN…WVGS) and 68 to 264 (RKEP…LSFE). Over residues 149–171 (SSGQPQVSSSAQPSPADASQPEA) the composition is skewed to low complexity. Residues 194 to 212 (LIHKDGQDDPKLKVTECRR) are compositionally biased toward basic and acidic residues. 4 positions are modified to phosphoserine: S214, S215, S241, and S250.

This is an uncharacterized protein from Bos taurus (Bovine).